The chain runs to 351 residues: tRNA (guanine(26)-N(2))-dimethyltransferase (351 aa).

Residues 4-350 form the Trm1 methyltransferase domain; the sequence is VLRREGAVQF…AGYGEVKRAL (347 aa). Residues Arg39, Arg65, Asp83, Asp109, and Ala110 each coordinate S-adenosyl-L-methionine.

It belongs to the class I-like SAM-binding methyltransferase superfamily. Trm1 family.

It carries out the reaction guanosine(26) in tRNA + 2 S-adenosyl-L-methionine = N(2)-dimethylguanosine(26) in tRNA + 2 S-adenosyl-L-homocysteine + 2 H(+). Functionally, dimethylates a single guanine residue at position 26 of a number of tRNAs using S-adenosyl-L-methionine as donor of the methyl groups. This Pyrobaculum neutrophilum (strain DSM 2338 / JCM 9278 / NBRC 100436 / V24Sta) (Thermoproteus neutrophilus) protein is tRNA (guanine(26)-N(2))-dimethyltransferase.